The chain runs to 315 residues: tRNA wybutosine-synthesizing protein 5 (315 aa).

A JmjC domain is found at 102–267; the sequence is DEKYYLRSLG…YDTTDTYGNK (166 aa). Y106 provides a ligand contact to 2-oxoglutarate. Residues H160 and D162 each contribute to the Fe cation site. 2-oxoglutarate-binding residues include N166 and K175. H235 is a Fe cation binding site.

The protein belongs to the TYW5 family. In terms of assembly, homodimer. Requires Fe(2+) as cofactor.

The enzyme catalyses 7-[(3S)-3-amino-3-carboxypropyl]wyosine(37) in tRNA(Phe) + 2-oxoglutarate + O2 = 7-(2-hydroxy-3-amino-3-carboxypropyl)wyosine(37) in tRNA(Phe) + succinate + CO2. Its pathway is tRNA modification; wybutosine-tRNA(Phe) biosynthesis. Its function is as follows. tRNA hydroxylase that acts as a component of the wybutosine biosynthesis pathway. Wybutosine is a hyper modified guanosine with a tricyclic base found at the 3'-position adjacent to the anticodon of eukaryotic phenylalanine tRNA. Catalyzes the hydroxylation of 7-(a-amino-a-carboxypropyl)wyosine (yW-72) into undermodified hydroxywybutosine (OHyW*). OHyW* being further transformed into hydroxywybutosine (OHyW) by LCMT2/TYW4. OHyW is a derivative of wybutosine found in higher eukaryotes. The protein is tRNA wybutosine-synthesizing protein 5 (Tyw5) of Mus musculus (Mouse).